A 396-amino-acid polypeptide reads, in one-letter code: Probable sugar efflux transporter (396 aa).

The next 12 membrane-spanning stretches (helical) occupy residues 15 to 35, 50 to 70, 81 to 101, 103 to 123, 136 to 156, 169 to 189, 209 to 229, 246 to 266, 275 to 295, 301 to 321, 333 to 353, and 364 to 384; these read VVTL…PVGL, VGIM…PFML, LICL…AWNF, VLVI…SITA, AQAL…GLPI, TFFA…KLLP, PALM…YTAY, FATV…LVFG, LLVS…LPAA, LALL…GMQV, VAMA…ALAG, and TIGY…VLIF.

It belongs to the major facilitator superfamily. SotB (TC 2.A.1.2) family.

The protein localises to the cell inner membrane. Its function is as follows. Involved in the efflux of sugars. The physiological role may be the reduction of the intracellular concentration of toxic sugars or sugar metabolites. The sequence is that of Probable sugar efflux transporter from Salmonella arizonae (strain ATCC BAA-731 / CDC346-86 / RSK2980).